Reading from the N-terminus, the 359-residue chain is DNA polymerase IV (359 aa).

Residues 4–184 (IVHVDMDAFY…LKVNRIPGVG (181 aa)) form the UmuC domain. Residues D8 and D102 each coordinate Mg(2+). E103 is a catalytic residue.

This sequence belongs to the DNA polymerase type-Y family. As to quaternary structure, monomer. The cofactor is Mg(2+).

Its subcellular location is the cytoplasm. It catalyses the reaction DNA(n) + a 2'-deoxyribonucleoside 5'-triphosphate = DNA(n+1) + diphosphate. Its function is as follows. Poorly processive, error-prone DNA polymerase involved in untargeted mutagenesis. Copies undamaged DNA at stalled replication forks, which arise in vivo from mismatched or misaligned primer ends. These misaligned primers can be extended by PolIV. Exhibits no 3'-5' exonuclease (proofreading) activity. May be involved in translesional synthesis, in conjunction with the beta clamp from PolIII. The protein is DNA polymerase IV of Xanthomonas oryzae pv. oryzae (strain MAFF 311018).